The chain runs to 472 residues: MELIIILLALGLLMFTAYRGFSVILFAPICALFAVLLTDPSHVLPFFSSIFMEKMAGFIKLYFPVFLLGAIFGKVVEMAGLAASIAKTIVRLVGAKRAILAIVLMGAVLTYSGVSLFVVVFAVYPFAKNMFQEANIPKRLIPGTIALGAFTFTMDALPGTPQIQNVIPTSFFKTDIYAAPWLGLMGAVIVLAAGMLYLESRRKKAQASGEGYGGFDSQNAPAPESIESAAEPDKSPIRHALAFVPLILVGAVNKYFTIYLPKWYPNGFDFSSIGLKEFGRLDISSAAAIWSVEIALVIGIITTILFDWRSVFAQLKEGLNEGIGGALLASMNTGAEYGFGGIIAALPGFHKLSSGISHTFTDPLVNGAVTTTALAGITGSASGGMGIALSAMSEQYLQAIQAYNIPPEVMHRVISMASGGMDTLPHNGAVITLLAVTGLTHRQSYRDIFAITLIKTAAVFAVIAIYSLTGLV.

The next 6 helical transmembrane spans lie at 4-24, 27-47, 56-76, 99-119, 140-160, and 176-196; these read IIILLALGLLMFTAYRGFSVI, APICALFAVLLTDPSHVLPFF, AGFIKLYFPVFLLGAIFGKVV, ILAIVLMGAVLTYSGVSLFVV, LIPGTIALGAFTFTMDALPGT, and IYAAPWLGLMGAVIVLAAGML. Residues 209 to 229 form a disordered region; sequence GEGYGGFDSQNAPAPESIESA. A compositionally biased stretch (low complexity) spans 220 to 229; that stretch reads APAPESIESA. A run of 5 helical transmembrane segments spans residues 240–260, 286–306, 323–343, 372–392, and 448–468; these read ALAFVPLILVGAVNKYFTIYL, AAAIWSVEIALVIGIITTILF, IGGALLASMNTGAEYGFGGII, TALAGITGSASGGMGIALSAM, and IFAITLIKTAAVFAVIAIYSL.

It belongs to the CitM (TC 2.A.11) transporter family.

It is found in the cell membrane. This is an uncharacterized protein from Bacillus subtilis (strain 168).